A 310-amino-acid chain; its full sequence is HTH-type transcriptional activator TtdR (310 aa).

Residues 6–63 (PLAKDLQVLVEIVHSGSFSAAAATLGQTPAFVTKRIQILENTLATTLLNRSARGVALT) enclose the HTH lysR-type domain. Residues 23–42 (FSAAAATLGQTPAFVTKRIQ) constitute a DNA-binding region (H-T-H motif).

The protein belongs to the LysR transcriptional regulatory family.

Its function is as follows. Positive regulator required for L-tartrate-dependent anaerobic growth on glycerol. Induces expression of the ttdA-ttdB-ygjE operon. This is HTH-type transcriptional activator TtdR (ttdR) from Escherichia coli O6:H1 (strain CFT073 / ATCC 700928 / UPEC).